Here is a 92-residue protein sequence, read N- to C-terminus: Probable K(+)/H(+) antiporter subunit F (92 aa).

The next 3 membrane-spanning stretches (helical) occupy residues 4–24, 36–56, and 62–82; these read AVVW…AFAL, RILG…TFGI, and VYFE…IALA.

Belongs to the CPA3 antiporters (TC 2.A.63) subunit F family. May form a hetero-oligomeric complex that consists of six subunits: PhaAB, PhaC, PhaD, PhaE, PhaF and PhaG.

Its subcellular location is the cell membrane. Functionally, part of a K(+) efflux system which is required for the adaptation of R.meliloti to alkaline pH as well as for the infection process during symbiotic nodule development. This is Probable K(+)/H(+) antiporter subunit F (phaF) from Rhizobium meliloti (strain 1021) (Ensifer meliloti).